Here is a 249-residue protein sequence, read N- to C-terminus: MNLGEKLTEGKTKIVYAHPNDPTLAIIIHKDGISAGDGARRHIIPGKGALSGRTTANVFTMLNHAGVATHFVAAPEPTVMIVRRCVMIPLEVVNRRIATGSYIRRHPDVAEGTRFDPPLLEFFLKDDARHDPQISPEEIVAQGIASADEVEQLASESRRVFLLIEEAWAAQDIVLCDLKIEFGRDASGALVVADVIDNDSWRIWPGGMKERMLDKQVYRNMPVVTDDGLEQVRRLYEEVAHRTDAWVNR.

Belongs to the SAICAR synthetase family.

It carries out the reaction 5-amino-1-(5-phospho-D-ribosyl)imidazole-4-carboxylate + L-aspartate + ATP = (2S)-2-[5-amino-1-(5-phospho-beta-D-ribosyl)imidazole-4-carboxamido]succinate + ADP + phosphate + 2 H(+). It participates in purine metabolism; IMP biosynthesis via de novo pathway; 5-amino-1-(5-phospho-D-ribosyl)imidazole-4-carboxamide from 5-amino-1-(5-phospho-D-ribosyl)imidazole-4-carboxylate: step 1/2. This chain is Phosphoribosylaminoimidazole-succinocarboxamide synthase, found in Roseiflexus castenholzii (strain DSM 13941 / HLO8).